The chain runs to 21 residues: Tertiapin (21 aa).

2 cysteine pairs are disulfide-bonded: Cys-3/Cys-14 and Cys-5/Cys-18.

Oxidation of Met-13 results in the loss of biological activity. Post-translationally, an amidation at Lys-21 is suggested in Ref.1. Expressed by the venom gland.

It localises to the secreted. Presynaptic neurotoxin that blocks the inwardly rectifying Kir1.1/KCNJ1 and Kir3.1/3.4 (KCNJ3/KCNJ5) potassium channels with high affinity by binding to the M1-M2 linker region of these channels in a 1:1 stoichiometry. It may block the potassium channel pore by occluding its alpha helix into the channel vestibule. Tertiapin-Q also inhibits calcium-activated large conductance BK-type (KCNMA) potassium channels in a concentration-, and voltage-dependent manner, in addition to inhibiting Kir3.1/3.2 (KCNJ3/KCNJ6) heteromultimers potassium channels. It can prevent dose-dependently acetylcholine(ACh)-induced atrioventricular blocks in mammalian hearts, as KCNJ3/KCNJ5 channels (also named I(KACh), because these channels are activated by ACh) are found in mammalian myocytes. Interacts specifically with calmodulin in the presence of calcium. The protein is Tertiapin of Apis mellifera (Honeybee).